Reading from the N-terminus, the 170-residue chain is uncharacterized protein (170 aa).

In terms of domain architecture, Ferritin-like diiron spans 1-148 (MVKSQKVIDV…TIHDFFENAT (148 aa)).

This is an uncharacterized protein from Ureaplasma parvum serovar 3 (strain ATCC 700970).